Here is a 196-residue protein sequence, read N- to C-terminus: uncharacterized protein (196 aa).

The chain crosses the membrane as a helical span at residues Y71 to G87.

The protein resides in the membrane. This is an uncharacterized protein from Dictyostelium discoideum (Social amoeba).